The sequence spans 242 residues: Small ribosomal subunit protein uS7m (242 aa).

The transit peptide at 1–37 (MAAPALRAPLRWSGLALGVRCAVWNLPGLTQVRGSRY) directs the protein to the mitochondrion. Residue lysine 228 is modified to N6-acetyllysine.

This sequence belongs to the universal ribosomal protein uS7 family. Component of the mitochondrial ribosome small subunit (28S) which comprises a 12S rRNA and about 30 distinct proteins.

It localises to the mitochondrion. The chain is Small ribosomal subunit protein uS7m (Mrps7) from Mus musculus (Mouse).